A 153-amino-acid polypeptide reads, in one-letter code: Protein ripply2.2 (153 aa).

The WRPW motif; required for transcriptional repression and interaction with tle4 signature appears at 58–61 (WRPW). Residues 93–128 (HPVRLFWPKSKLLDNTYQEAADLLRNFPVQATISLY) are ripply homology domain. The tract at residues 127 to 153 (LYNDSESDTDNEEDSSEEEQDSGFESE) is disordered. Positions 131 to 153 (SESDTDNEEDSSEEEQDSGFESE) are enriched in acidic residues.

This sequence belongs to the ripply family. As to quaternary structure, interacts with tle4 and tbx6, and mediates interaction between these proteins. In terms of tissue distribution, expressed in the presomitic mesoderm (PSM) in the anterior halves of somitomeres S-I, S-II and S-III.

The protein resides in the nucleus. Functionally, required during somitogenesis for the formation of somite boundaries. Represses the expression of genes involved in somite segmentation by acting with the corepressor tle4 to down-regulate the transcriptional activity of tbx6. May act by regulating the activity of tle4. Represses transcription of delta2, thy1 and ripply2.2/bowline itself. The chain is Protein ripply2.2 (ripply2.2) from Xenopus laevis (African clawed frog).